Reading from the N-terminus, the 251-residue chain is Malonyl-[acyl-carrier protein] O-methyltransferase (251 aa).

The protein belongs to the methyltransferase superfamily.

It carries out the reaction malonyl-[ACP] + S-adenosyl-L-methionine = malonyl-[ACP] methyl ester + S-adenosyl-L-homocysteine. It functions in the pathway cofactor biosynthesis; biotin biosynthesis. In terms of biological role, converts the free carboxyl group of a malonyl-thioester to its methyl ester by transfer of a methyl group from S-adenosyl-L-methionine (SAM). It allows to synthesize pimeloyl-ACP via the fatty acid synthetic pathway. The polypeptide is Malonyl-[acyl-carrier protein] O-methyltransferase (Salmonella typhimurium (strain LT2 / SGSC1412 / ATCC 700720)).